The primary structure comprises 107 residues: MAVRLIPTIWLFIVFAVIVSALPSLVSSRKLLEVKKQENLTVREEEKSHMPHVTKTSTLSALPKGKIPNSTPSKKGHAAVFAGKLRSRHLSTVDRYLRSVPSPGVGH.

An N-terminal signal peptide occupies residues 1–21 (MAVRLIPTIWLFIVFAVIVSA). Residues 22–92 (LPSLVSSRKL…GKLRSRHLST (71 aa)) constitute a propeptide that is removed on maturation. Asparagine 39 carries an N-linked (GlcNAc...) asparagine glycan. The tract at residues 43–76 (REEEKSHMPHVTKTSTLSALPKGKIPNSTPSKKG) is disordered. A hydroxyproline mark is found at proline 101 and proline 103.

The protein belongs to the C-terminally encoded plant signaling peptide (CEP) family. In terms of assembly, interacts with CEP receptors (e.g. CEPR1 and CEPR2). Post-translationally, the mature small signaling peptide is generated by proteolytic processing of the longer precursor.

Its subcellular location is the secreted. It is found in the extracellular space. The protein resides in the apoplast. Functionally, extracellular signaling peptide that may regulate primary root growth rate and systemic nitrogen (N)-demand signaling. The protein is Precursor of CEP14 of Arabidopsis thaliana (Mouse-ear cress).